Consider the following 425-residue polypeptide: MADKEAAFDDAVEERVINEEYKIWKKNTPFLYDLVMTHALEWPSLTAQWLPDVTRPDGKDFSIHRLVLGTHTSDEQNHLVIASVQLPNDDAQFDASHYDSEKGEFGGFGSVSGKIEIEIKINHEGEVNRARYMPQNPCIIATKTPSCDVLVFDYTKHPSKPDPSGECNPDLRLRGHQKEGYGLSWNPNLSGNLLSASDDHTICLWDISAVPKEGKVVDAKTIFTGHTAVVEDVSWHLLHESLFGSVADDQKLMIWDTRSNNTSKPSHSVDAHTAEVNCLSFNPYSEFILATGSADKTVALWDLRNLKLKLHSFESHKDEIFQVQWSPHNETILASSGTDRRLNVWDLSKIGEEQSPEDAEDGPPELLFIHGGHTAKISDFSWNPNEPWVICSVSEDNIMQVWQMAENIYNDEDTEGSVDPEGQGS.

Residue Ala-2 is modified to N-acetylalanine. WD repeat units follow at residues 32–125 (YDLV…NHEG), 126–175 (EVNR…RLRG), 176–223 (HQKE…KTIF), 225–270 (GHTA…HSVD), 271–314 (AHTA…HSFE), 315–371 (SHKD…FIHG), and 372–404 (GHTA…VWQM).

The protein belongs to the WD repeat RBAP46/RBAP48/MSI1 family. Binds directly to histone H4, probably via helix 1 of the histone fold, a region that is not accessible when histone H4 is in chromatin. Probably forms a large corepressor complex that contains ncor1, sin3a, hdac1-A and/or hdac1-B, hdac2, rbbp4-A and/or rbbp4-B and possibly rbbp7.

Its subcellular location is the nucleus. The protein localises to the chromosome. It is found in the telomere. In terms of biological role, core histone-binding subunit that may target chromatin assembly factors, chromatin remodeling factors and histone deacetylases to their histone substrates in a manner that is regulated by nucleosomal DNA. Component of several complexes which regulate chromatin metabolism. The sequence is that of Histone-binding protein RBBP4-B (rbbp4-b) from Xenopus laevis (African clawed frog).